Here is a 222-residue protein sequence, read N- to C-terminus: UPF0758 protein YicR (222 aa).

Residues 100 to 222 form the MPN domain; the sequence is PLLSPEMTRE…NVSFAERGWI (123 aa). Residues H171, H173, and D184 each contribute to the Zn(2+) site. The short motif at 171 to 184 is the JAMM motif element; the sequence is HNHPSGCAEPSKAD.

It belongs to the UPF0758 family. YicR subfamily.

In Shigella boydii serotype 18 (strain CDC 3083-94 / BS512), this protein is UPF0758 protein YicR.